We begin with the raw amino-acid sequence, 70 residues long: NADH dehydrogenase [ubiquinone] 1 alpha subcomplex subunit 1 (70 aa).

The helical transmembrane segment at 1–21 (MWFEILPGLAIMGVCLVIPGV) threads the bilayer.

It belongs to the complex I NDUFA1 subunit family. In terms of assembly, complex I is composed of 45 different subunits.

It localises to the mitochondrion inner membrane. Its function is as follows. Accessory subunit of the mitochondrial membrane respiratory chain NADH dehydrogenase (Complex I), that is believed not to be involved in catalysis. Complex I functions in the transfer of electrons from NADH to the respiratory chain. The immediate electron acceptor for the enzyme is believed to be ubiquinone. This chain is NADH dehydrogenase [ubiquinone] 1 alpha subcomplex subunit 1 (Ndufa1), found in Mus musculus (Mouse).